A 122-amino-acid chain; its full sequence is Large ribosomal subunit protein uL14 (122 aa).

The protein belongs to the universal ribosomal protein uL14 family. As to quaternary structure, part of the 50S ribosomal subunit. Forms a cluster with proteins L3 and L19. In the 70S ribosome, L14 and L19 interact and together make contacts with the 16S rRNA in bridges B5 and B8.

Binds to 23S rRNA. Forms part of two intersubunit bridges in the 70S ribosome. In Shewanella denitrificans (strain OS217 / ATCC BAA-1090 / DSM 15013), this protein is Large ribosomal subunit protein uL14.